The primary structure comprises 277 residues: AFSEECPYTVNDYSQENGPNIFALRKRFPLGMNDEDEEGKEALAIKDKLPGGLDEYQNQLYGICNETCTTCGPAAIDYVPADAPNGYAYGGSAHDGSHGNLRGHDNKGSEGYGYEAPYNPGFNGAPGSNGMQNYVPPHGAGYSAPYGVPHGAAHGSRYSSFSSVNKYGKHGDEKHHSSKKHEGNDGEGEKKKKSKKHKDHDGEKKKSKKHKDNEDAESVKSKKHKSHDCEKKKSKKHKDNEDAESVKSKKSVKEKGEKHNGKKPCSKKTNEEKKKKK.

2 disordered regions span residues 95 to 114 (DGSH…GYGY) and 162 to 277 (SSVN…KKKK). Basic and acidic residues-rich tracts occupy residues 169–190 (KHGD…EGEK) and 211–220 (KDNEDAESVK). Residues 221-237 (SKKHKSHDCEKKKSKKH) show a composition bias toward basic residues. Composition is skewed to basic and acidic residues over residues 238-259 (KDNE…GEKH) and 268-277 (KTNEEKKKKK).

The protein localises to the secreted. KAHRP might mimick human histidine-rich glycoproteins to anchor host thrombospondin or a parasite analog in a binding complex with the endothelial cell receptor. This is Knob-associated histidine-rich protein from Plasmodium falciparum (isolate CDC / Honduras).